Reading from the N-terminus, the 232-residue chain is Secreted LysM effector Mg3LysM (232 aa).

An N-terminal signal peptide occupies residues 1–16 (MQNIFLAATLLGAAFA). A LysM 1 domain is found at 47–91 (TNYTVKAGDTLGAIAKQYNSGVCDIAKVNGIDNPDYIKPDQVLSI). 6 N-linked (GlcNAc...) asparagine glycosylation sites follow: Asn-48, Asn-100, Asn-138, Asn-195, Asn-209, and Asn-227. LysM domains lie at 120-165 (STYT…VINT) and 177-221 (GTYV…IIIL).

The protein belongs to the secreted LysM effector family.

Secreted effector that enables the plant pathogenic fungus to manipulate host defenses for successful infection. Binds chitin fragments and blocks the activation of chitin-induced plant defense responses. Protects fungal hyphae against hydrolytic plant enzymes. This Zymoseptoria tritici (strain CBS 115943 / IPO323) (Speckled leaf blotch fungus) protein is Secreted LysM effector Mg3LysM.